A 288-amino-acid polypeptide reads, in one-letter code: Putative aryl-alcohol dehydrogenase AAD10 (288 aa).

It belongs to the aldo/keto reductase family. Aldo/keto reductase 2 subfamily.

This chain is Putative aryl-alcohol dehydrogenase AAD10 (AAD10), found in Saccharomyces cerevisiae (strain ATCC 204508 / S288c) (Baker's yeast).